A 264-amino-acid polypeptide reads, in one-letter code: ATP synthase subunit a (264 aa).

A run of 6 helical transmembrane segments spans residues 29-49 (TWHI…LWIF), 90-110 (IAPL…MDMI), 134-154 (DVNI…FYSI), 177-197 (IPVN…SLAL), 208-228 (LIFI…TLGV), and 235-255 (LIFH…LTIV).

Belongs to the ATPase A chain family. As to quaternary structure, F-type ATPases have 2 components, CF(1) - the catalytic core - and CF(0) - the membrane proton channel. CF(1) has five subunits: alpha(3), beta(3), gamma(1), delta(1), epsilon(1). CF(0) has three main subunits: a(1), b(2) and c(9-12). The alpha and beta chains form an alternating ring which encloses part of the gamma chain. CF(1) is attached to CF(0) by a central stalk formed by the gamma and epsilon chains, while a peripheral stalk is formed by the delta and b chains.

Its subcellular location is the cell inner membrane. Key component of the proton channel; it plays a direct role in the translocation of protons across the membrane. This chain is ATP synthase subunit a, found in Shewanella baltica (strain OS223).